Reading from the N-terminus, the 384-residue chain is Zinc metalloproteinase nas-12 (384 aa).

The N-terminal stretch at 1 to 25 (MLYIPQFSIYFCLGYLLLFCKISNA) is a signal peptide. Residues 73–271 (VSIKGSSMNR…EKLNRLGQCG (199 aa)) enclose the Peptidase M12A domain. Cystine bridges form between C116/C270, C137/C156, C287/C325, C296/C318, and C305/C322. H164 lines the Zn(2+) pocket. The active site involves E165. Positions 168 and 174 each coordinate Zn(2+). Positions 287-325 (CQDVATAVSCEGNRRRGMCKNPFYKQMMIKSCQKTCRLC) constitute a ShKT 1 domain. N-linked (GlcNAc...) asparagine glycosylation is present at N340. Cystine bridges form between C348-C384, C355-C377, and C364-C381. Residues 348-384 (CEDKHPRCDIYSHNGFCTLPFYDDVRYQLCAKTCNLC) form the ShKT 2 domain.

Requires Zn(2+) as cofactor. In terms of tissue distribution, expressed in pharyngeal glands.

The protein localises to the secreted. Metalloprotease. This is Zinc metalloproteinase nas-12 (nas-12) from Caenorhabditis elegans.